Consider the following 58-residue polypeptide: Large ribosomal subunit protein uL30 (58 aa).

This sequence belongs to the universal ribosomal protein uL30 family. As to quaternary structure, part of the 50S ribosomal subunit.

The chain is Large ribosomal subunit protein uL30 from Pelobacter propionicus (strain DSM 2379 / NBRC 103807 / OttBd1).